The following is a 631-amino-acid chain: ESX-3 secretion system protein EccA3 (631 aa).

Position 385-392 (385-392 (GPPGTGKT)) interacts with ATP.

Belongs to the CbxX/CfxQ family. As to quaternary structure, part of the ESX-3 / type VII secretion system (T7SS), which is composed of cytosolic and membrane components.

It localises to the cytoplasm. Its function is as follows. Part of the ESX-3 specialized secretion system, which is important for iron and zinc uptake or homeostasis. EccA3 exhibits ATPase activity and may provide energy for the export of ESX-3 substrates. The sequence is that of ESX-3 secretion system protein EccA3 from Mycobacterium tuberculosis (strain CDC 1551 / Oshkosh).